A 201-amino-acid polypeptide reads, in one-letter code: MTLTIGLTGGIASGKSTVSAMMRELGLPVIDADEAARAVVRPGEDAYRQIVAAFGPGILQTNGEIDRAKLGAIVFNNEEERKKLNAIVHPAVRQKMLAEKEALVRSGTKTVVLDIPLLFESGLTSWVDKVLVVYVDDDIQLRRLMERNGFTEEEARARICAQWPLAEKMKRADAVINNNGTREETRRQLLAILKQWDALEK.

The 198-residue stretch at 4–201 (TIGLTGGIAS…ILKQWDALEK (198 aa)) folds into the DPCK domain. ATP is bound at residue 12-17 (ASGKST).

This sequence belongs to the CoaE family.

The protein resides in the cytoplasm. The catalysed reaction is 3'-dephospho-CoA + ATP = ADP + CoA + H(+). The protein operates within cofactor biosynthesis; coenzyme A biosynthesis; CoA from (R)-pantothenate: step 5/5. Functionally, catalyzes the phosphorylation of the 3'-hydroxyl group of dephosphocoenzyme A to form coenzyme A. The chain is Dephospho-CoA kinase from Geobacillus kaustophilus (strain HTA426).